The sequence spans 298 residues: Tyrosine recombinase XerC (298 aa).

Residues 1–84 form the Core-binding (CB) domain; sequence MNHIQEAFLN…TLRTFYEYWM (84 aa). In terms of domain architecture, Tyr recombinase spans 105–286; the sequence is YLPQFFYEEE…SNQQLRKVYL (182 aa). Residues Arg-145, Lys-169, His-238, Arg-241, and His-264 contribute to the active site. The O-(3'-phospho-DNA)-tyrosine intermediate role is filled by Tyr-273.

This sequence belongs to the 'phage' integrase family. XerC subfamily. As to quaternary structure, forms a cyclic heterotetrameric complex composed of two molecules of XerC and two molecules of XerD.

The protein localises to the cytoplasm. Functionally, site-specific tyrosine recombinase, which acts by catalyzing the cutting and rejoining of the recombining DNA molecules. The XerC-XerD complex is essential to convert dimers of the bacterial chromosome into monomers to permit their segregation at cell division. It also contributes to the segregational stability of plasmids. This is Tyrosine recombinase XerC from Staphylococcus aureus (strain Mu3 / ATCC 700698).